A 439-amino-acid chain; its full sequence is Probable N-acetylmuramidase (439 aa).

A signal peptide spans 1–57; it reads MPVSRIKVKNRHLKKKAKKPLAFYKPATKFAGAVLIAGTLTTTHELLLQQTSPMVQA. Disordered regions lie at residues 218–241 and 287–320; these read SAGT…TSST and SSSS…PASQ. Residues 241–284 form the LysM 1 domain; it reads TTYTVKSGDTLWGISQKYGISVAQIQSANNLKSTVIYIGQKLVL. Over residues 287–319 the composition is skewed to low complexity; the sequence is SSSSSNTNSSTSSGNSAGTTTPTTSVTPAKPAS. Residues 321–364 enclose the LysM 2 domain; it reads TTIKVKSGDTLWGLSVKYKTTIAQLKSWNHLNSDTIFIGQNLIV. A disordered region spans residues 372–393; sequence SSSTGSSSASTSSTSNSSAASN. The LysM 3 domain maps to 395–438; the sequence is SIHKVVKGDTLWGLSQKSGSPIASIKAWNHLSSDTILIGQYLRI.

This sequence belongs to the glycosyl hydrolase 73 family.

The protein resides in the secreted. It catalyses the reaction Hydrolysis of (1-&gt;4)-beta-linkages between N-acetylmuramic acid and N-acetyl-D-glucosamine residues in a peptidoglycan and between N-acetyl-D-glucosamine residues in chitodextrins.. Functionally, required for cell separation during growth. This chain is Probable N-acetylmuramidase (acmA), found in Lactococcus lactis subsp. lactis (strain IL1403) (Streptococcus lactis).